An 87-amino-acid chain; its full sequence is Small ribosomal subunit protein bS20 (87 aa).

The disordered stretch occupies residues 1–22; that stretch reads MANIKSQIKRIGTNKKAQERNK.

The protein belongs to the bacterial ribosomal protein bS20 family.

Its function is as follows. Binds directly to 16S ribosomal RNA. The protein is Small ribosomal subunit protein bS20 of Clavibacter michiganensis subsp. michiganensis (strain NCPPB 382).